We begin with the raw amino-acid sequence, 74 residues long: Putative defensin-like protein 12 (74 aa).

The signal sequence occupies residues 1–26 (MAKPCAAFLVFLCLSMLILSIPDISC). 3 disulfides stabilise this stretch: C26–C50, C33–C59, and C39–C61.

It belongs to the DEFL family.

It localises to the secreted. The sequence is that of Putative defensin-like protein 12 from Arabidopsis thaliana (Mouse-ear cress).